Consider the following 236-residue polypeptide: DNA repair protein RecO (236 aa).

The protein belongs to the RecO family.

Its function is as follows. Involved in DNA repair and RecF pathway recombination. The protein is DNA repair protein RecO of Photobacterium profundum (strain SS9).